The primary structure comprises 92 residues: UPF0237 protein MM_0082 (92 aa).

One can recognise an ACT domain in the interval 7-81 (IITVIGSDRV…KSLGVEVKVQ (75 aa)).

The protein belongs to the UPF0237 family.

The protein is UPF0237 protein MM_0082 of Methanosarcina mazei (strain ATCC BAA-159 / DSM 3647 / Goe1 / Go1 / JCM 11833 / OCM 88) (Methanosarcina frisia).